Consider the following 487-residue polypeptide: Transmembrane protein 161B (487 aa).

An N-linked (GlcNAc...) asparagine glycan is attached at Asn34. A helical transmembrane segment spans residues Leu107–Phe127. An N-linked (GlcNAc...) asparagine glycan is attached at Asn135. Helical transmembrane passes span Ile136 to Thr156 and Ser169 to Thr189. An N-linked (GlcNAc...) asparagine glycan is attached at Asn203. Transmembrane regions (helical) follow at residues Phe228–Leu248, Ile265–Val285, Leu305–Leu325, Val367–His387, and Leu459–Phe479.

It belongs to the TMEM161 family.

Its subcellular location is the cell membrane. Essential for maintaining normal cardiac rhythm in the developing heart and for neonatal survival. Inhibits potassium and calcium currents in the cardiomyocytes, this assists in timely action potential repolarization and thereby maintains normal cardiac rhythm. The sequence is that of Transmembrane protein 161B (TMEM161B) from Homo sapiens (Human).